The sequence spans 322 residues: Probable L-asparaginase (322 aa).

The Asparaginase/glutaminase domain maps to 6–320; that stretch reads PRLALIHTGG…EDIRRVFTQG (315 aa). Positions 13 to 37 are disordered; it reads TGGTIASRPSPDGRGLTPQTPPALP. Thr-16 functions as the O-isoaspartyl threonine intermediate in the catalytic mechanism. Substrate-binding positions include Ser-54 and 85–86; that span reads TD.

This sequence belongs to the asparaginase 1 family.

Its subcellular location is the cytoplasm. The enzyme catalyses L-asparagine + H2O = L-aspartate + NH4(+). This is Probable L-asparaginase (ansA) from Deinococcus radiodurans (strain ATCC 13939 / DSM 20539 / JCM 16871 / CCUG 27074 / LMG 4051 / NBRC 15346 / NCIMB 9279 / VKM B-1422 / R1).